The primary structure comprises 1469 residues: Chromosome condensation protein dpy-27 (1469 aa).

The disordered stretch occupies residues 1 to 25 (MQPFKRRALTSDDDRPYADTDSMPE). The span at 9–18 (LTSDDDRPYA) shows a compositional bias: basic and acidic residues. 122-129 (GPNGSGKS) is an ATP binding site. Residues 356–542 (ELEENKDIML…KGTLQTMMAE (187 aa)) are a coiled coil. The SMC hinge domain occupies 621-736 (PGFKGRLGDL…VDSLEEATRI (116 aa)). A disordered region spans residues 758 to 781 (GALTGGGKPTTGRIRNDNNPNMSG). Coiled-coil stretches lie at residues 805-974 (LKLQ…AQLE), 1016-1056 (AYQT…DIIE), and 1159-1182 (TSAK…RMAR). Positions 1404-1469 (LPEFNRFPPA…VQRRVRRSRH (66 aa)) are disordered. Over residues 1439 to 1449 (EEEDEEDELIE) the composition is skewed to acidic residues.

Belongs to the SMC family. SMC4 subfamily. Component of the dosage compensation complex, which contains the mix-1/SMC2 and dpy-27/SMC4 heterodimer, and three non SMC subunits that probably regulate the complex: dpy-26, capg-1 and dpy-28. Within the complex, interacts with dpy-28, mix-1, dpy-26 and capg-1. Interacts with dpy-21. Interacts with dpy-28; the interaction is required for dpy-28 protein stability and dpy-28 association with the X chromosome. Interacts with smcl-1.

The protein localises to the nucleus. It localises to the chromosome. Its function is as follows. Central component of the condensin I-like dosage compensation complex that associates specifically with hermaphrodite X chromosomes to reduce their gene transcription throughout development. Its strong similarity with the condensin subunit smc4 suggests that it may reduce the X-chromosome transcript level by condensing the chromatin structure during interphase. Involved in the recruitment of the dosage compensation proteins mix-1 and dpy-21 to the X chromosome. Might be involved in the reduction of histone H4 lysine 16 acetylation (H4K16ac) on dosage compensated X chromosomes. As a member of the dosage compensation complex, also binds to regulatory regions of the autosomal her-1 gene, required for male development, possibly contributing to its repression in hermaphrodites. Also plays a role in the regulation of growth and body fat metabolism downstream of the TOR complex 2 pathway. This Caenorhabditis elegans protein is Chromosome condensation protein dpy-27 (dpy-27).